The chain runs to 346 residues: MHSSLIKLGFLLLLIQVSLSHAQLSPSFYDKTCPQVFDIATTTIVNALRSDPRIAASILRLHFHDCFVNGCDASILLDNTTSFRTEKDAFGNANSARGFDVIDKMKAAVEKACPKTVSCADLLAIAAQESVVLAGGPSWRVPNGRRDSLRGFMDLANDNLPAPFFTLNQLKDRFKNVGLDRASDLVALSGGHTFGKNQCQFIMDRLYNFSNTGLPDPTLDKSYLSTLRKQCPRNGNQSVLVDFDLRTPTLFDNKYYVNLKENKGLIQSDQELFSSPDASDTLPLVREYADGQGKFFDAFAKAMIRMSSLSPLTGKQGEIRLNCRVVNSKSKIMDVVEDALEFASSM.

An N-terminal signal peptide occupies residues 1-22 (MHSSLIKLGFLLLLIQVSLSHA). At Gln23 the chain carries Pyrrolidone carboxylic acid. 4 disulfides stabilise this stretch: Cys33/Cys113, Cys66/Cys71, Cys119/Cys323, and Cys199/Cys231. Catalysis depends on His64, which acts as the Proton acceptor. Residues Asp65, Val68, Gly70, Asp72, and Ser74 each coordinate Ca(2+). The N-linked (GlcNAc...) asparagine glycan is linked to Asn79. Pro161 is a substrate binding site. A heme b-binding site is contributed by His192. Residue Thr193 coordinates Ca(2+). 2 N-linked (GlcNAc...) asparagine glycosylation sites follow: Asn208 and Asn236. Ca(2+) contacts are provided by Asp244, Thr247, and Asp252.

This sequence belongs to the peroxidase family. Classical plant (class III) peroxidase subfamily. Heme b serves as cofactor. Ca(2+) is required as a cofactor.

It is found in the secreted. The protein localises to the vacuole. It catalyses the reaction 2 a phenolic donor + H2O2 = 2 a phenolic radical donor + 2 H2O. Its function is as follows. Removal of H(2)O(2), oxidation of toxic reductants, biosynthesis and degradation of lignin, suberization, auxin catabolism, response to environmental stresses such as wounding, pathogen attack and oxidative stress. These functions might be dependent on each isozyme/isoform in each plant tissue. This is Peroxidase 37 (PER37) from Arabidopsis thaliana (Mouse-ear cress).